Consider the following 256-residue polypeptide: UPF0246 protein Sbal_1048 (256 aa).

This sequence belongs to the UPF0246 family.

This Shewanella baltica (strain OS155 / ATCC BAA-1091) protein is UPF0246 protein Sbal_1048.